The primary structure comprises 151 residues: Small ribosomal subunit protein uS13 (151 aa).

A disordered region spans residues 131-151 (RGQRTKSSFRRGRTVGVKKKQ). A compositionally biased stretch (basic residues) spans 133–151 (QRTKSSFRRGRTVGVKKKQ).

This sequence belongs to the universal ribosomal protein uS13 family. In terms of assembly, part of the 30S ribosomal subunit. Forms a loose heterodimer with protein S19. Forms two bridges to the 50S subunit in the 70S ribosome.

Located at the top of the head of the 30S subunit, it contacts several helices of the 16S rRNA. In the 70S ribosome it contacts the 23S rRNA (bridge B1a) and protein L5 of the 50S subunit (bridge B1b), connecting the 2 subunits; these bridges are implicated in subunit movement. The protein is Small ribosomal subunit protein uS13 of Methanopyrus kandleri (strain AV19 / DSM 6324 / JCM 9639 / NBRC 100938).